We begin with the raw amino-acid sequence, 364 residues long: UDP-N-acetylglucosamine--N-acetylmuramyl-(pentapeptide) pyrophosphoryl-undecaprenol N-acetylglucosamine transferase 1 (364 aa).

UDP-N-acetyl-alpha-D-glucosamine contacts are provided by residues 10–12 (TGG), N124, S195, I250, and Q295.

The protein belongs to the glycosyltransferase 28 family. MurG subfamily.

The protein localises to the cell membrane. It catalyses the reaction di-trans,octa-cis-undecaprenyl diphospho-N-acetyl-alpha-D-muramoyl-L-alanyl-D-glutamyl-meso-2,6-diaminopimeloyl-D-alanyl-D-alanine + UDP-N-acetyl-alpha-D-glucosamine = di-trans,octa-cis-undecaprenyl diphospho-[N-acetyl-alpha-D-glucosaminyl-(1-&gt;4)]-N-acetyl-alpha-D-muramoyl-L-alanyl-D-glutamyl-meso-2,6-diaminopimeloyl-D-alanyl-D-alanine + UDP + H(+). The protein operates within cell wall biogenesis; peptidoglycan biosynthesis. In terms of biological role, cell wall formation. Catalyzes the transfer of a GlcNAc subunit on undecaprenyl-pyrophosphoryl-MurNAc-pentapeptide (lipid intermediate I) to form undecaprenyl-pyrophosphoryl-MurNAc-(pentapeptide)GlcNAc (lipid intermediate II). This chain is UDP-N-acetylglucosamine--N-acetylmuramyl-(pentapeptide) pyrophosphoryl-undecaprenol N-acetylglucosamine transferase 1, found in Bacillus anthracis.